Here is a 326-residue protein sequence, read N- to C-terminus: Pyruvate dehydrogenase E1 component subunit beta (326 aa).

Glu59 contacts thiamine diphosphate.

As to quaternary structure, heterodimer of an alpha and a beta chain. It depends on thiamine diphosphate as a cofactor.

It carries out the reaction N(6)-[(R)-lipoyl]-L-lysyl-[protein] + pyruvate + H(+) = N(6)-[(R)-S(8)-acetyldihydrolipoyl]-L-lysyl-[protein] + CO2. Functionally, the pyruvate dehydrogenase complex catalyzes the overall conversion of pyruvate to acetyl-CoA and CO(2). It contains multiple copies of three enzymatic components: pyruvate dehydrogenase (E1), dihydrolipoamide acetyltransferase (E2) and lipoamide dehydrogenase (E3). In Rickettsia conorii (strain ATCC VR-613 / Malish 7), this protein is Pyruvate dehydrogenase E1 component subunit beta (pdhB).